Reading from the N-terminus, the 490-residue chain is Betaine aldehyde dehydrogenase (490 aa).

Position 93 (D93) interacts with K(+). 150–152 provides a ligand contact to NAD(+); it reads GAW. K162 functions as the Charge relay system in the catalytic mechanism. 176-179 is an NAD(+) binding site; sequence KPSE. V180 provides a ligand contact to K(+). NAD(+) is bound at residue 230–233; that stretch reads GIAS. L246 is a K(+) binding site. Residue E252 is the Proton acceptor of the active site. Positions 254, 286, and 387 each coordinate NAD(+). C286 (nucleophile) is an active-site residue. Position 286 is a cysteine sulfenic acid (-SOH) (C286). K(+) contacts are provided by K457 and G460. The Charge relay system role is filled by E464.

This sequence belongs to the aldehyde dehydrogenase family. As to quaternary structure, dimer of dimers. Requires K(+) as cofactor.

The catalysed reaction is betaine aldehyde + NAD(+) + H2O = glycine betaine + NADH + 2 H(+). The protein operates within amine and polyamine biosynthesis; betaine biosynthesis via choline pathway; betaine from betaine aldehyde: step 1/1. Functionally, involved in the biosynthesis of the osmoprotectant glycine betaine. Catalyzes the irreversible oxidation of betaine aldehyde to the corresponding acid. The protein is Betaine aldehyde dehydrogenase of Yersinia pseudotuberculosis serotype O:1b (strain IP 31758).